The primary structure comprises 181 residues: Large ribosomal subunit protein uL5c (181 aa).

This sequence belongs to the universal ribosomal protein uL5 family. In terms of assembly, part of the 50S ribosomal subunit; contacts the 5S rRNA.

It localises to the plastid. The protein localises to the chloroplast. Functionally, binds 5S rRNA, forms part of the central protuberance of the 50S subunit. This chain is Large ribosomal subunit protein uL5c (rpl5), found in Rhodomonas salina (Cryptomonas salina).